Here is a 794-residue protein sequence, read N- to C-terminus: FT-interacting protein 1 (794 aa).

Over residues methionine 1–proline 27 the composition is skewed to basic and acidic residues. Positions methionine 1–glycine 34 are disordered. C2 domains follow at residues tryptophan 37–tyrosine 158, valine 198–tyrosine 321, and tyrosine 364–tyrosine 492. Positions 76, 123, 125, and 131 each coordinate Ca(2+). 4 consecutive transmembrane segments (helical) span residues leucine 510–proline 532, isoleucine 595–tryptophan 615, leucine 619–leucine 639, and leucine 737–isoleucine 757.

This sequence belongs to the MCTP family. As to quaternary structure, interacts with FT in phloem companion cells. Ca(2+) is required as a cofactor. Expressed in the vascular tissues of roots, cotyledons and rosette leaves. Specifically located in the phloem including companion cells. Observed in flowers. Not detected in the shoot apical meristem.

The protein localises to the endoplasmic reticulum membrane. It localises to the cell junction. The protein resides in the plasmodesma. Functionally, involved in the export of FT from the phloem companion cells to the sieve elements through the plasmodesmata. Regulates flowering time under long days. May function as a signaling molecule by regulating the trafficking of other regulators. This is FT-interacting protein 1 from Arabidopsis thaliana (Mouse-ear cress).